An 868-amino-acid polypeptide reads, in one-letter code: Protein NIP100 (868 aa).

The 51-residue stretch at 34-84 (GETQFAKGIWYGIELDKPLGKNDGSANGIRYFDIDLKKANSNGGYYGLFCK) folds into the CAP-Gly domain. 3 coiled-coil regions span residues 101 to 175 (LNGN…HLDN), 207 to 375 (LDQT…QEEL), and 645 to 776 (SLLS…QIKE).

As to quaternary structure, component of the dynactin complex composed of at least ARP1, JNM1, NIP100 and ARP10. Dynactin comprises a short rod of the ARP1 filament attached to ARP10 at its pointed-end and probably associated with the capping protein at its barbed-end. The rod is implicated in dynein cargo binding. A sidearm formed by NIP100 projects from the ARP1 filament and is implicated in motor binding.

It localises to the cytoplasm. The protein localises to the cytoskeleton. Its subcellular location is the spindle pole. Functionally, motor-binding component of the dynactin complex which assists cytoplasmic dynein by increasing its processivity and by regulation of its cargo binding. The dynactin complex is required for the spindle translocation late in anaphase and is involved in a cell wall synthesis checkpoint. This chain is Protein NIP100 (NIP100), found in Saccharomyces cerevisiae (strain ATCC 204508 / S288c) (Baker's yeast).